Consider the following 79-residue polypeptide: Cytochrome c oxidase subunit 7A1, mitochondrial (79 aa).

A mitochondrion-targeting transit peptide spans 1–21; sequence MQALRVSRALIRSFNTTARNR. The Mitochondrial matrix segment spans residues 22 to 46; sequence FQNRVPEKQKLFQEDNDIPLYLKGG. The chain crosses the membrane as a helical span at residues 47-75; the sequence is IVDNILYRVTMGLCLGGSAYSMYCLGWAS. Topologically, residues 76 to 79 are mitochondrial intermembrane; sequence FPRN.

It belongs to the cytochrome c oxidase VIIa family. Component of the complex IV (CIV, cytochrome c oxidase), a multisubunit enzyme composed of 14 subunits. The complex is composed of a catalytic core of 3 subunits MT-CO1, MT-CO2 and MT-CO3, encoded in the mitochondrial DNA, and 11 supernumerary subunits COX4I1 (or COX4I2), COX5A, COX5B, COX6A2 (or COX6A1), COX6B1 (or COX6B2), COX6C, COX7A1 (or COX7A2), COX7B, COX7C, COX8B and NDUFA4, which are encoded in the nuclear genome. The complex exists as a monomer or a dimer and forms supercomplexes (SCs) in the inner mitochondrial membrane with NADH-ubiquinone oxidoreductase (complex I, CI) and ubiquinol-cytochrome c oxidoreductase (cytochrome b-c1 complex, complex III, CIII), resulting in different assemblies (supercomplex SCI(1)III(2)IV(1) and megacomplex MCI(2)III(2)IV(2)).

The protein localises to the mitochondrion inner membrane. It functions in the pathway energy metabolism; oxidative phosphorylation. Functionally, component of the mitochondrial respiratory complex IV (CIV, also named cytochrome c oxidase complex), the last enzyme in the mitochondrial electron transport chain which drives oxidative phosphorylation. The CIV complex is the component of the respiratory chain that catalyzes the reduction of oxygen to water. Acts as an assembly factor that specifically drives the homodimerization of CIV complexes, mediating the formation of mitochondrial respiratory supercomplexes (respirasomes) containing two CIV: supercomplxes with two molecules of CIV show improved activity. Despite being highly expressed in brown adipose tissue, not required for thermogenesis. This Trachypithecus cristatus (Silvered leaf-monkey) protein is Cytochrome c oxidase subunit 7A1, mitochondrial (COX7A1).